Here is a 293-residue protein sequence, read N- to C-terminus: Proline iminopeptidase (293 aa).

Residues 28–277 enclose the AB hydrolase-1 domain; sequence PLVLLHGGPG…NCGHMSFVEK (250 aa). Residue Ser105 is the Nucleophile of the active site. Asp244 is a catalytic residue. His271 acts as the Proton donor in catalysis.

It belongs to the peptidase S33 family.

It is found in the cell envelope. The enzyme catalyses Release of N-terminal proline from a peptide.. Its function is as follows. Releases the N-terminal proline from various substrates. The protein is Proline iminopeptidase of Lactobacillus crispatus (strain ST1).